The sequence spans 192 residues: Elongation factor P (192 aa).

Lysine 38 bears the N6-(3,6-diaminohexanoyl)-5-hydroxylysine mark.

It belongs to the elongation factor P family. In terms of processing, may be beta-lysylated on the epsilon-amino group of Lys-38 by the combined action of EpmA and EpmB, and then hydroxylated on the C5 position of the same residue by EpmC (if this protein is present). Lysylation is critical for the stimulatory effect of EF-P on peptide-bond formation. The lysylation moiety may extend toward the peptidyltransferase center and stabilize the terminal 3-CCA end of the tRNA. Hydroxylation of the C5 position on Lys-38 may allow additional potential stabilizing hydrogen-bond interactions with the P-tRNA.

It is found in the cytoplasm. Its pathway is protein biosynthesis; polypeptide chain elongation. Functionally, involved in peptide bond synthesis. Alleviates ribosome stalling that occurs when 3 or more consecutive Pro residues or the sequence PPG is present in a protein, possibly by augmenting the peptidyl transferase activity of the ribosome. Modification of Lys-38 is required for alleviation. This Mannheimia succiniciproducens (strain KCTC 0769BP / MBEL55E) protein is Elongation factor P.